The chain runs to 153 residues: Ribonuclease VapC6 (153 aa).

Positions V6 to K152 constitute a PINc domain. 2 residues coordinate Mg(2+): D9 and D120.

The protein belongs to the PINc/VapC protein family. Mg(2+) serves as cofactor.

Functionally, toxic component of a type II toxin-antitoxin (TA) system. An RNase. In Methanocaldococcus jannaschii (strain ATCC 43067 / DSM 2661 / JAL-1 / JCM 10045 / NBRC 100440) (Methanococcus jannaschii), this protein is Ribonuclease VapC6.